A 434-amino-acid chain; its full sequence is Alpha-enolase (434 aa).

Ser-40 is a binding site for Mg(2+). 2 residues coordinate substrate: His-158 and Glu-167. The Proton donor role is filled by Glu-210. Residues Asp-245, Glu-293, and Asp-318 each coordinate Mg(2+). Substrate is bound by residues Glu-293 and Asp-318. Lys-343 (proton acceptor) is an active-site residue. Residues Ser-370–Ser-373 and Lys-394 each bind substrate.

It belongs to the enolase family. As to quaternary structure, homodimer. It depends on Mg(2+) as a cofactor.

Its subcellular location is the cytoplasm. It carries out the reaction (2R)-2-phosphoglycerate = phosphoenolpyruvate + H2O. Its pathway is carbohydrate degradation; glycolysis; pyruvate from D-glyceraldehyde 3-phosphate: step 4/5. The chain is Alpha-enolase from Sceloporus undulatus (Eastern fence lizard).